The following is a 294-amino-acid chain: Glyceraldehyde-3-phosphate dehydrogenase (294 aa).

NAD(+)-binding residues include D19, R63, and T105. D-glyceraldehyde 3-phosphate-binding positions include 134-136 (SCT) and T165. Residue C135 is the Nucleophile of the active site. Position 177 is an N6-acetyllysine (K177). D-glyceraldehyde 3-phosphate is bound by residues 194–195 (TG) and R217. K234 is subject to N6-acetyllysine.

Belongs to the glyceraldehyde-3-phosphate dehydrogenase family. In terms of assembly, homotetramer.

It localises to the cytoplasm. The catalysed reaction is D-glyceraldehyde 3-phosphate + phosphate + NAD(+) = (2R)-3-phospho-glyceroyl phosphate + NADH + H(+). It participates in carbohydrate degradation; glycolysis; pyruvate from D-glyceraldehyde 3-phosphate: step 1/5. In terms of biological role, catalyzes the oxidative phosphorylation of glyceraldehyde 3-phosphate (G3P) to 1,3-bisphosphoglycerate (BPG) using the cofactor NAD. The first reaction step involves the formation of a hemiacetal intermediate between G3P and a cysteine residue, and this hemiacetal intermediate is then oxidized to a thioester, with concomitant reduction of NAD to NADH. The reduced NADH is then exchanged with the second NAD, and the thioester is attacked by a nucleophilic inorganic phosphate to produce BPG. This is Glyceraldehyde-3-phosphate dehydrogenase (gap) from Pseudescherichia vulneris (Escherichia vulneris).